The following is a 145-amino-acid chain: ATP synthase epsilon chain (145 aa).

Residues 93 to 104 (AEAEKARARAQE) are compositionally biased toward basic and acidic residues. The interval 93–113 (AEAEKARARAQEALKNPDASK) is disordered.

The protein belongs to the ATPase epsilon chain family. F-type ATPases have 2 components, CF(1) - the catalytic core - and CF(0) - the membrane proton channel. CF(1) has five subunits: alpha(3), beta(3), gamma(1), delta(1), epsilon(1). CF(0) has three main subunits: a, b and c.

Its subcellular location is the cell inner membrane. In terms of biological role, produces ATP from ADP in the presence of a proton gradient across the membrane. This Francisella philomiragia subsp. philomiragia (strain ATCC 25017 / CCUG 19701 / FSC 153 / O#319-036) protein is ATP synthase epsilon chain.